Here is a 343-residue protein sequence, read N- to C-terminus: 4-hydroxy-2-oxovalerate aldolase 1 (343 aa).

The Pyruvate carboxyltransferase domain occupies 8 to 260 (ITVHDMSLRD…ETGVDVFAIS (253 aa)). 16-17 (RD) provides a ligand contact to substrate. Asp-17 contacts Mn(2+). The active-site Proton acceptor is the His-20. Substrate-binding residues include Ser-170 and His-199. His-199 and His-201 together coordinate Mn(2+). Tyr-290 is a binding site for substrate.

It belongs to the 4-hydroxy-2-oxovalerate aldolase family.

It catalyses the reaction (S)-4-hydroxy-2-oxopentanoate = acetaldehyde + pyruvate. The chain is 4-hydroxy-2-oxovalerate aldolase 1 (bphI) from Burkholderia cenocepacia (strain ATCC BAA-245 / DSM 16553 / LMG 16656 / NCTC 13227 / J2315 / CF5610) (Burkholderia cepacia (strain J2315)).